A 192-amino-acid chain; its full sequence is VQ motif-containing protein 22 (192 aa).

Low complexity predominate over residues 24-38; it reads ASTAVTTTTAGDTTS. Residues 24–65 form a disordered region; sequence ASTAVTTTTAGDTTSIDSRLSPETGRVTKPTRRRSRASRRTP. The span at 52–62 shows a compositional bias: basic residues; that stretch reads KPTRRRSRASR. Positions 76–85 match the VQ motif; it reads FRAMVQQYTG. Disordered regions lie at residues 101 to 135 and 163 to 192; these read FSLTSSSDPSAGSSQQAPWQYNFQPHAPLQPPQRP and FGTVDGSGGGGSAPSSKEATNSNSSSSRLQ. Low complexity-rich tracts occupy residues 102–114 and 175–192; these read SLTSSSDPSAGSS and APSSKEATNSNSSSSRLQ.

It localises to the nucleus. Its function is as follows. May function as positive regulator of plant growth. The polypeptide is VQ motif-containing protein 22 (Arabidopsis thaliana (Mouse-ear cress)).